We begin with the raw amino-acid sequence, 136 residues long: Beta-hordothionin (136 aa).

A signal peptide spans 1 to 27 (MGSKGLKGVMVCLLILGLVLEHVQVEG). Cystine bridges form between Cys30–Cys66, Cys31–Cys58, Cys39–Cys56, and Cys43–Cys52. Positions 73–136 (LALVSNSDEP…GDVGLTSLTA (64 aa)) are cleaved as a propeptide — acidic domain.

It belongs to the plant thionin (TC 1.C.44) family. 4 C-C subfamily. As to quaternary structure, homodimer.

It is found in the secreted. Thionins are small plant proteins which are toxic to animal cells. They seem to exert their toxic effect at the level of the cell membrane. Their precise function is not known. The polypeptide is Beta-hordothionin (THI1.2) (Hordeum vulgare (Barley)).